Reading from the N-terminus, the 256-residue chain is Large ribosomal subunit protein bL28m (256 aa).

Residues 1–55 (MPLHKYPVWLWKRLQLREGICSRLPGHYLRSLEEERTPTPVHYRPHGAKFKINPK) constitute a mitochondrion transit peptide.

It belongs to the bacterial ribosomal protein bL28 family. Component of the mitochondrial large ribosomal subunit (mt-LSU). Mature mammalian 55S mitochondrial ribosomes consist of a small (28S) and a large (39S) subunit. The 28S small subunit contains a 12S ribosomal RNA (12S mt-rRNA) and 30 different proteins. The 39S large subunit contains a 16S rRNA (16S mt-rRNA), a copy of mitochondrial valine transfer RNA (mt-tRNA(Val)), which plays an integral structural role, and 52 different proteins. Interacts with OXA1L. Found in a variety of normal tissues including spleen, testes, thymus, liver, kidney, brain, adrenal, lung and retinal tissue.

It is found in the mitochondrion. This Homo sapiens (Human) protein is Large ribosomal subunit protein bL28m (MRPL28).